The following is a 373-amino-acid chain: UDP-N-acetylglucosamine--N-acetylmuramyl-(pentapeptide) pyrophosphoryl-undecaprenol N-acetylglucosamine transferase (373 aa).

UDP-N-acetyl-alpha-D-glucosamine contacts are provided by residues 10-12 (TGG), Asn124, Ser195, and Gln297.

The protein belongs to the glycosyltransferase 28 family. MurG subfamily.

It is found in the cell membrane. The enzyme catalyses Mur2Ac(oyl-L-Ala-gamma-D-Glu-L-Lys-D-Ala-D-Ala)-di-trans,octa-cis-undecaprenyl diphosphate + UDP-N-acetyl-alpha-D-glucosamine = beta-D-GlcNAc-(1-&gt;4)-Mur2Ac(oyl-L-Ala-gamma-D-Glu-L-Lys-D-Ala-D-Ala)-di-trans,octa-cis-undecaprenyl diphosphate + UDP + H(+). It functions in the pathway cell wall biogenesis; peptidoglycan biosynthesis. Functionally, cell wall formation. Catalyzes the transfer of a GlcNAc subunit on undecaprenyl-pyrophosphoryl-MurNAc-pentapeptide (lipid intermediate I) to form undecaprenyl-pyrophosphoryl-MurNAc-(pentapeptide)GlcNAc (lipid intermediate II). This chain is UDP-N-acetylglucosamine--N-acetylmuramyl-(pentapeptide) pyrophosphoryl-undecaprenol N-acetylglucosamine transferase, found in Oenococcus oeni (strain ATCC BAA-331 / PSU-1).